Reading from the N-terminus, the 476-residue chain is Bifunctional protein HldE (476 aa).

A ribokinase region spans residues 1–318 (MKPVLPDYSK…AEAVHGSKDT (318 aa)). 195–198 (NMSE) lines the ATP pocket. Residue Asp-264 is part of the active site. The interval 344–476 (MTNGCFDILH…IIEAIKGGRG (133 aa)) is cytidylyltransferase.

In the N-terminal section; belongs to the carbohydrate kinase PfkB family. It in the C-terminal section; belongs to the cytidylyltransferase family. As to quaternary structure, homodimer.

The enzyme catalyses D-glycero-beta-D-manno-heptose 7-phosphate + ATP = D-glycero-beta-D-manno-heptose 1,7-bisphosphate + ADP + H(+). It catalyses the reaction D-glycero-beta-D-manno-heptose 1-phosphate + ATP + H(+) = ADP-D-glycero-beta-D-manno-heptose + diphosphate. It functions in the pathway nucleotide-sugar biosynthesis; ADP-L-glycero-beta-D-manno-heptose biosynthesis; ADP-L-glycero-beta-D-manno-heptose from D-glycero-beta-D-manno-heptose 7-phosphate: step 1/4. The protein operates within nucleotide-sugar biosynthesis; ADP-L-glycero-beta-D-manno-heptose biosynthesis; ADP-L-glycero-beta-D-manno-heptose from D-glycero-beta-D-manno-heptose 7-phosphate: step 3/4. Its function is as follows. Catalyzes the phosphorylation of D-glycero-D-manno-heptose 7-phosphate at the C-1 position to selectively form D-glycero-beta-D-manno-heptose-1,7-bisphosphate. Catalyzes the ADP transfer from ATP to D-glycero-beta-D-manno-heptose 1-phosphate, yielding ADP-D-glycero-beta-D-manno-heptose. This is Bifunctional protein HldE from Vibrio cholerae serotype O1 (strain M66-2).